Here is a 1090-residue protein sequence, read N- to C-terminus: Exocyst complex component SEC5A (1090 aa).

The segment at 18 to 128 (LKEQAKRDLT…ARKEDDGAWD (111 aa)) is disordered. Positions 45–69 (QQPRQQKPVAAAAAPPKKSAAAVRK) are enriched in low complexity. The span at 109–124 (RGSDVREKGRARKEDD) shows a compositional bias: basic and acidic residues. Ser180 bears the Phosphoserine mark. Disordered regions lie at residues 759-783 (TSRQ…NTYG), 987-1010 (VETP…DKQS), and 1046-1090 (APLE…PRRR). Basic and acidic residues predominate over residues 998 to 1009 (RGSEDTVSDDKQ). The span at 1058–1082 (TYSSFRGSMDSPSRNYRGSQSSGSP) shows a compositional bias: polar residues.

Belongs to the SEC5 family. As to quaternary structure, the exocyst complex is composed of SEC3, SEC5, SEC6, SEC8, SEC10, EXO70A1 and EXO84B. Interacts with SEC3A and EXO70B1. Binds to EXO70H1 and EXO70B2. Binds directly to B1L.

The protein resides in the cytoplasm. It is found in the cytosol. The protein localises to the secreted. It localises to the extracellular exosome. Its function is as follows. Component of the exocyst complex involved in the docking of exocytic vesicles with fusion sites on the plasma membrane during regulated or polarized secretion. Involved in polarized cell growth and organ morphogenesis. During cytokinesis, involved in cell plate initiation, cell plate maturation and formation of new primary cell wall. Probable component of an exocyst subcomplex specifically involved in autophagy-related, Golgi-independent membrane traffic to the vacuole. Regulates autophagosome formation and autophagy-related Golgi-independent import into the vacuole. This Arabidopsis thaliana (Mouse-ear cress) protein is Exocyst complex component SEC5A.